Here is a 289-residue protein sequence, read N- to C-terminus: Diaminopimelate epimerase (289 aa).

Substrate is bound by residues Asn-11 and Asn-78. Cys-87 serves as the catalytic Proton donor. Residues 88 to 89 (GN), Asn-163, Asn-199, and 217 to 218 (ER) contribute to the substrate site. Cys-226 acts as the Proton acceptor in catalysis. Residue 227–228 (GT) participates in substrate binding.

This sequence belongs to the diaminopimelate epimerase family. As to quaternary structure, homodimer.

The protein localises to the cytoplasm. The catalysed reaction is (2S,6S)-2,6-diaminopimelate = meso-2,6-diaminopimelate. It functions in the pathway amino-acid biosynthesis; L-lysine biosynthesis via DAP pathway; DL-2,6-diaminopimelate from LL-2,6-diaminopimelate: step 1/1. Catalyzes the stereoinversion of LL-2,6-diaminopimelate (L,L-DAP) to meso-diaminopimelate (meso-DAP), a precursor of L-lysine and an essential component of the bacterial peptidoglycan. In Mycobacterium bovis (strain ATCC BAA-935 / AF2122/97), this protein is Diaminopimelate epimerase.